We begin with the raw amino-acid sequence, 1106 residues long: Platelet-derived growth factor receptor beta (1106 aa).

Residues 1–32 form the signal peptide; sequence MRLPGAMPALALKGELLLLSLLLLLEPQISQG. Ig-like C2-type domains are found at residues 33-120, 129-210, 214-309, 331-403, and 416-524; these read LVVT…YIFV, PNDA…YRLQ, INVS…INIT, HRSR…HEDA, and PVRV…VIVV. Topologically, residues 33 to 532 are extracellular; sequence LVVTPPGPEL…VVPHSLPFKV (500 aa). N45, N89, and N103 each carry an N-linked (GlcNAc...) asparagine glycan. A disulfide bond links C54 and C100. C149 and C190 are disulfide-bonded. N215 and N230 each carry an N-linked (GlcNAc...) asparagine glycan. C235 and C291 are disulfide-bonded. N-linked (GlcNAc...) asparagine glycosylation is found at N292, N307, N354, N371, N468, and N479. The cysteines at positions 436 and 508 are disulfide-linked. A helical membrane pass occupies residues 533–553; the sequence is VVISAILALVVLTIISLIILI. The Cytoplasmic portion of the chain corresponds to 554–1106; sequence MLWQKKPRYE…PRAEAEDSFL (553 aa). 3 positions are modified to phosphotyrosine; by autocatalysis: Y562, Y579, and Y581. A Protein kinase domain is found at 600–962; the sequence is LVLGRTLGSG…QLVLLLERLL (363 aa). ATP is bound by residues 606–614 and K634; that span reads LGSGAFGQV. Y686 is subject to Phosphotyrosine; by ABL1 and ABL2. Phosphotyrosine; by autocatalysis occurs at positions 716, 740, 751, 763, 771, 775, and 778. D826 acts as the Proton acceptor in catalysis. The residue at position 857 (Y857) is a Phosphotyrosine; by autocatalysis. A phosphotyrosine; by ABL1 and ABL2 mark is found at Y934 and Y970. 2 positions are modified to phosphotyrosine; by autocatalysis: Y1009 and Y1021. The tract at residues 1019-1106 is disordered; it reads NDYIIPLPDP…PRAEAEDSFL (88 aa). A compositionally biased stretch (polar residues) spans 1043 to 1060; the sequence is SLASSTLNEVNTSSTISC. Residues 1066-1088 are compositionally biased toward acidic residues; it reads PQDEPEPEPQLELQVEPEPELEQ.

It belongs to the protein kinase superfamily. Tyr protein kinase family. CSF-1/PDGF receptor subfamily. As to quaternary structure, interacts with homodimeric PDGFB and PDGFD, and with heterodimers formed by PDGFA and PDGFB. May also interact with homodimeric PDGFC. Monomer in the absence of bound ligand. Interaction with homodimeric PDGFB, heterodimers formed by PDGFA and PDGFB or homodimeric PDGFD, leads to receptor dimerization, where both PDGFRA homodimers and heterodimers with PDGFRB are observed. Interacts with SH2B2/APS. Interacts directly (tyrosine phosphorylated) with SHB. Interacts (tyrosine phosphorylated) with PIK3R1 and RASA1. Interacts (tyrosine phosphorylated) with CBL. Interacts (tyrosine phosphorylated) with SRC and SRC family kinases. Interacts (tyrosine phosphorylated) with PIK3C2B, maybe indirectly. Interacts (tyrosine phosphorylated) with SHC1, GRB7, GRB10 and NCK1. Interaction with GRB2 is mediated by SHC1. Interacts (via C-terminus) with NHERF1. Post-translationally, autophosphorylated on tyrosine residues upon ligand binding. Autophosphorylation occurs in trans, i.e. one subunit of the dimeric receptor phosphorylates tyrosine residues on the other subunit. Phosphorylation at Tyr-579, and to a lesser degree, at Tyr-581, is important for interaction with SRC family kinases. Phosphorylation at Tyr-740 and Tyr-751 is important for interaction with PIK3R1. Phosphorylation at Tyr-751 is important for interaction with NCK1. Phosphorylation at Tyr-771 and Tyr-857 is important for interaction with RASA1/GAP. Phosphorylation at Tyr-857 is important for efficient phosphorylation of PLCG1 and PTPN11, resulting in increased phosphorylation of AKT1, MAPK1/ERK2 and/or MAPK3/ERK1, PDCD6IP/ALIX and STAM, and in increased cell proliferation. Phosphorylation at Tyr-1009 is important for interaction with PTPN11. Phosphorylation at Tyr-1009 and Tyr-1021 is important for interaction with PLCG1. Phosphorylation at Tyr-1021 is important for interaction with CBL; PLCG1 and CBL compete for the same binding site. Dephosphorylated by PTPRJ at Tyr-751, Tyr-857, Tyr-1009 and Tyr-1021. Dephosphorylated by PTPN2 at Tyr-579 and Tyr-1021. N-glycosylated. In terms of processing, ubiquitinated. After autophosphorylation, the receptor is polyubiquitinated, leading to its degradation.

Its subcellular location is the cell membrane. The protein localises to the cytoplasmic vesicle. The protein resides in the lysosome lumen. It carries out the reaction L-tyrosyl-[protein] + ATP = O-phospho-L-tyrosyl-[protein] + ADP + H(+). With respect to regulation, present in an inactive conformation in the absence of bound ligand. Binding of PDGFB and/or PDGFD leads to dimerization and activation by autophosphorylation on tyrosine residues. Inhibited by imatinib. Functionally, tyrosine-protein kinase that acts as a cell-surface receptor for homodimeric PDGFB and PDGFD and for heterodimers formed by PDGFA and PDGFB, and plays an essential role in the regulation of embryonic development, cell proliferation, survival, differentiation, chemotaxis and migration. Plays an essential role in blood vessel development by promoting proliferation, migration and recruitment of pericytes and smooth muscle cells to endothelial cells. Plays a role in the migration of vascular smooth muscle cells and the formation of neointima at vascular injury sites. Required for normal development of the cardiovascular system. Required for normal recruitment of pericytes (mesangial cells) in the kidney glomerulus, and for normal formation of a branched network of capillaries in kidney glomeruli. Promotes rearrangement of the actin cytoskeleton and the formation of membrane ruffles. Binding of its cognate ligands - homodimeric PDGFB, heterodimers formed by PDGFA and PDGFB or homodimeric PDGFD -leads to the activation of several signaling cascades; the response depends on the nature of the bound ligand and is modulated by the formation of heterodimers between PDGFRA and PDGFRB. Phosphorylates PLCG1, PIK3R1, PTPN11, RASA1/GAP, CBL, SHC1 and NCK1. Activation of PLCG1 leads to the production of the cellular signaling molecules diacylglycerol and inositol 1,4,5-trisphosphate, mobilization of cytosolic Ca(2+) and the activation of protein kinase C. Phosphorylation of PIK3R1, the regulatory subunit of phosphatidylinositol 3-kinase, leads to the activation of the AKT1 signaling pathway. Phosphorylation of SHC1, or of the C-terminus of PTPN11, creates a binding site for GRB2, resulting in the activation of HRAS, RAF1 and down-stream MAP kinases, including MAPK1/ERK2 and/or MAPK3/ERK1. Promotes phosphorylation and activation of SRC family kinases. Promotes phosphorylation of PDCD6IP/ALIX and STAM. Receptor signaling is down-regulated by protein phosphatases that dephosphorylate the receptor and its down-stream effectors, and by rapid internalization of the activated receptor. In Homo sapiens (Human), this protein is Platelet-derived growth factor receptor beta (PDGFRB).